A 468-amino-acid chain; its full sequence is ATP synthase subunit beta 2 (468 aa).

Residue 145 to 152 coordinates ATP; the sequence is GGAGVGKT.

It belongs to the ATPase alpha/beta chains family. F-type ATPases have 2 components, CF(1) - the catalytic core - and CF(0) - the membrane proton channel. CF(1) has five subunits: alpha(3), beta(3), gamma(1), delta(1), epsilon(1). CF(0) has three main subunits: a(1), b(2) and c(9-12). The alpha and beta chains form an alternating ring which encloses part of the gamma chain. CF(1) is attached to CF(0) by a central stalk formed by the gamma and epsilon chains, while a peripheral stalk is formed by the delta and b chains.

Its subcellular location is the cell membrane. The catalysed reaction is ATP + H2O + 4 H(+)(in) = ADP + phosphate + 5 H(+)(out). Its function is as follows. Produces ATP from ADP in the presence of a proton gradient across the membrane. The catalytic sites are hosted primarily by the beta subunits. This Mycoplasmopsis pulmonis (strain UAB CTIP) (Mycoplasma pulmonis) protein is ATP synthase subunit beta 2.